The following is a 505-amino-acid chain: Trans-cinnamate 4-monooxygenase (505 aa).

Residues 3–23 form a helical membrane-spanning segment; it reads LLLLEKTLLGLFLAAVVAIVV. Residues 213 to 218 and Ala-306 contribute to the (E)-cinnamate site; that span reads RSRLAQ. Cys-447 contributes to the heme binding site.

Belongs to the cytochrome P450 family. It depends on heme as a cofactor.

Its subcellular location is the membrane. The enzyme catalyses (E)-cinnamate + reduced [NADPH--hemoprotein reductase] + O2 = (E)-4-coumarate + oxidized [NADPH--hemoprotein reductase] + H2O + H(+). It participates in phenylpropanoid metabolism; trans-4-coumarate biosynthesis; trans-4-coumarate from trans-cinnamate: step 1/1. In terms of biological role, catalyzes the first oxidative step of the phenylpropanoid pathway in higher plants by transforming trans-cinnamate into p-coumarate. The compounds formed by this pathway are essential components for lignification, pollination, and defense against ultraviolet light, predators and pathogens. The protein is Trans-cinnamate 4-monooxygenase (CYP73A2) of Vigna radiata var. radiata (Mung bean).